The following is a 600-amino-acid chain: Elongation factor 4 (600 aa).

Residues 5–187 (KYIRNFSIIA…AIINKLPAPK (183 aa)) form the tr-type G domain. Residues 17 to 22 (DHGKST) and 134 to 137 (NKID) each bind GTP.

This sequence belongs to the TRAFAC class translation factor GTPase superfamily. Classic translation factor GTPase family. LepA subfamily.

The protein localises to the cell inner membrane. It catalyses the reaction GTP + H2O = GDP + phosphate + H(+). Required for accurate and efficient protein synthesis under certain stress conditions. May act as a fidelity factor of the translation reaction, by catalyzing a one-codon backward translocation of tRNAs on improperly translocated ribosomes. Back-translocation proceeds from a post-translocation (POST) complex to a pre-translocation (PRE) complex, thus giving elongation factor G a second chance to translocate the tRNAs correctly. Binds to ribosomes in a GTP-dependent manner. The polypeptide is Elongation factor 4 (Rickettsia prowazekii (strain Madrid E)).